Reading from the N-terminus, the 521-residue chain is Cytoplasmic polyadenylation element-binding protein 2 (521 aa).

Over residues 1 to 11 (MNLPQQQPPAA) the composition is skewed to pro residues. Disordered regions lie at residues 1-35 (MNLPQQQPPAAAPQQPQSRRSPVSPQLQQQHQAAA) and 50-88 (PLLKQSPWSNHQNSGWGTASMSWGAMHGRDHRRSGNMGI). A compositionally biased stretch (low complexity) spans 12–35 (APQQPQSRRSPVSPQLQQQHQAAA). Serine 21 bears the Phosphoserine mark. A compositionally biased stretch (polar residues) spans 55 to 70 (SPWSNHQNSGWGTASM). 2 consecutive RRM domains span residues 264–355 (RKVF…PWNL) and 372–454 (KTIF…PYVL).

Belongs to the RRM CPEB family. As to quaternary structure, interacts with TENT2/GLD2. In terms of tissue distribution, expressed in embryo, cerebellum, salivary gland, thymus, heart, liver, lung, spleen, kidney, intestine, ovary and round spermatids. Weakly expressed in granular cells of dentate gyrus and the pyramidal cells of CA3 and CA1 of the hippocampus.

Its subcellular location is the cytoplasm. In terms of biological role, may play a role in translational regulation of stored mRNAs in transcriptionally inactive haploid spermatids. Binds to poly(U) RNA oligomers. Required for cell cycle progression, specifically for the transition from metaphase to anaphase. This chain is Cytoplasmic polyadenylation element-binding protein 2 (Cpeb2), found in Mus musculus (Mouse).